The following is a 79-amino-acid chain: Aquaporin Z (79 aa).

A run of 2 helical transmembrane segments spans residues 4–24 and 33–53; these read LFAE…SAVF and IGFA…AYAV. The NPA 1 motif lies at 62–64; sequence NPA.

It belongs to the MIP/aquaporin (TC 1.A.8) family. As to quaternary structure, homotetramer.

It localises to the cell membrane. It catalyses the reaction H2O(in) = H2O(out). Its function is as follows. Channel that permits osmotically driven movement of water in both directions. It is involved in the osmoregulation and in the maintenance of cell turgor during volume expansion in rapidly growing cells. It mediates rapid entry or exit of water in response to abrupt changes in osmolarity. In Flavobacterium johnsoniae (Cytophaga johnsonae), this protein is Aquaporin Z.